Reading from the N-terminus, the 396-residue chain is MINVPSIESCDFHNKNVLLRVDFNVPIKNGRICDATRILRALPTIQYLANAGAKVIVISHFGRPKAKDSNLSLKNVVETLSRLLSKEVKFIDDCIGERVQRAINAMDGGDIILLENLRFYKEEEQNDSNFAKQLASLADIYINDAFSCSHRAHASISRITEFLPSYAGFCLQDELKYLEQAISFDAKPITAIVGGAKISTKIKMLIKLAEKVDYLILGGAIANNFLLFNKVNIGKSFFQNGVDDLLHDIVETANKNNCKIVVPEDVLVAVNSDYSTGVLRKIESILDGDIILDIGPQTLSTISGIIASSKTLLWNGPIGVFEHSAFANGTVEVMRVVSDLTHEGKLTSVIGGGDSLSAINTAGLADKDFTYISTGGGAFLSWLSGDEMPGLRSTLD.

Residues 22–24, Arg-37, 60–63, Arg-118, and Arg-151 each bind substrate; these read DFN and HFGR. ATP is bound by residues Lys-201, Glu-322, and 352 to 355; that span reads GGDS.

The protein belongs to the phosphoglycerate kinase family. Monomer.

It is found in the cytoplasm. The enzyme catalyses (2R)-3-phosphoglycerate + ATP = (2R)-3-phospho-glyceroyl phosphate + ADP. The protein operates within carbohydrate degradation; glycolysis; pyruvate from D-glyceraldehyde 3-phosphate: step 2/5. This Wolbachia pipientis subsp. Culex pipiens (strain wPip) protein is Phosphoglycerate kinase.